The sequence spans 140 residues: Small ribosomal subunit protein uS12 (140 aa).

Residues 33–55 (KEQTNVSSPQKRGVCTRVGTMTP) are disordered.

This sequence belongs to the universal ribosomal protein uS12 family. As to quaternary structure, part of the 30S ribosomal subunit. Contacts proteins S8 and S17. May interact with IF1 in the 30S initiation complex.

In terms of biological role, with S4 and S5 plays an important role in translational accuracy. Functionally, interacts with and stabilizes bases of the 16S rRNA that are involved in tRNA selection in the A site and with the mRNA backbone. Located at the interface of the 30S and 50S subunits, it traverses the body of the 30S subunit contacting proteins on the other side and probably holding the rRNA structure together. The combined cluster of proteins S8, S12 and S17 appears to hold together the shoulder and platform of the 30S subunit. The chain is Small ribosomal subunit protein uS12 from Geobacillus kaustophilus (strain HTA426).